The chain runs to 431 residues: MPVLTRSAELFEKAKKFIPGGVNSPVRAFKSVGGTPIYMAKGQGAYMTDVDGNTYLDYVGSWGPFILGSMHPRLTAAIEYTLRNIGTSFGTPIEIEIEIAELLCQIVPSLEMVRMVNSGTEATMSAVRLARGYTGKDKIIKFEGCYHGHGDSFLIKAGSGVLTLGDPDSPGVTKGTANDTLNATYNDIESVKAIVNENKGQVAAIIIEPVAGNTGVIPAKKEFLVALRELCDAEGIVLIFDEVMCGFRVALGGAQELYGVTPDLTTMGKIIGGGLPVGAFGGKRKIMENIAPLGSVYQAGTLSGNPLALTAGLETLKILMEENPYPELERKAAFLEAGFKDNMNKLGLNYTQNRVGSMACLFFTENEVYDYNSAITADTAKYGKYFHSMLDQGIYLAPSQFEAMFTSFVHTDEDLEKTVKANYNALVAATK.

At K269 the chain carries N6-(pyridoxal phosphate)lysine.

It belongs to the class-III pyridoxal-phosphate-dependent aminotransferase family. HemL subfamily. As to quaternary structure, homodimer. The cofactor is pyridoxal 5'-phosphate.

The protein localises to the cytoplasm. It catalyses the reaction (S)-4-amino-5-oxopentanoate = 5-aminolevulinate. It participates in porphyrin-containing compound metabolism; protoporphyrin-IX biosynthesis; 5-aminolevulinate from L-glutamyl-tRNA(Glu): step 2/2. It functions in the pathway porphyrin-containing compound metabolism; chlorophyll biosynthesis. In Chlorobaculum parvum (strain DSM 263 / NCIMB 8327) (Chlorobium vibrioforme subsp. thiosulfatophilum), this protein is Glutamate-1-semialdehyde 2,1-aminomutase.